Reading from the N-terminus, the 460-residue chain is GTPase Der (460 aa).

2 consecutive EngA-type G domains span residues 21–187 (PRVV…FSVD) and 198–373 (VRLA…AQLN). Residues 27-34 (GRPNVGKS), 74-78 (DTSGF), 141-144 (NKTE), 204-211 (GKPNTGKS), 251-255 (DTAGI), and 316-319 (NKWD) contribute to the GTP site. In terms of domain architecture, KH-like spans 374 to 457 (TKVETSALNT…PVKLTIRKNC (84 aa)).

It belongs to the TRAFAC class TrmE-Era-EngA-EngB-Septin-like GTPase superfamily. EngA (Der) GTPase family. As to quaternary structure, associates with the 50S ribosomal subunit.

Its function is as follows. GTPase that plays an essential role in the late steps of ribosome biogenesis. This chain is GTPase Der, found in Treponema pallidum subsp. pallidum (strain SS14).